The following is a 250-amino-acid chain: 5'-nucleotidase SurE (250 aa).

Residues D8, D9, S40, and N92 each contribute to the a divalent metal cation site.

This sequence belongs to the SurE nucleotidase family. A divalent metal cation is required as a cofactor.

It localises to the cytoplasm. The catalysed reaction is a ribonucleoside 5'-phosphate + H2O = a ribonucleoside + phosphate. In terms of biological role, nucleotidase that shows phosphatase activity on nucleoside 5'-monophosphates. The protein is 5'-nucleotidase SurE of Dichelobacter nodosus (strain VCS1703A).